Here is a 133-residue protein sequence, read N- to C-terminus: UPF0292 protein TGAM_1777 (133 aa).

The region spanning 20–100 (EGALIVEGLR…RVDVETRREL (81 aa)) is the Toprim domain. 3 residues coordinate Mg(2+): Glu26, Asp69, and Asp71.

This sequence belongs to the UPF0292 family. Requires Mg(2+) as cofactor.

The polypeptide is UPF0292 protein TGAM_1777 (Thermococcus gammatolerans (strain DSM 15229 / JCM 11827 / EJ3)).